The following is a 118-amino-acid chain: Small ribosomal subunit protein uS13 (118 aa).

The interval 97 to 118 (VRGQRTKTNARTCKGPRKAIKK) is disordered.

Belongs to the universal ribosomal protein uS13 family. Part of the 30S ribosomal subunit. Forms a loose heterodimer with protein S19. Forms two bridges to the 50S subunit in the 70S ribosome.

Its function is as follows. Located at the top of the head of the 30S subunit, it contacts several helices of the 16S rRNA. In the 70S ribosome it contacts the 23S rRNA (bridge B1a) and protein L5 of the 50S subunit (bridge B1b), connecting the 2 subunits; these bridges are implicated in subunit movement. Contacts the tRNAs in the A and P-sites. This Buchnera aphidicola subsp. Schizaphis graminum (strain Sg) protein is Small ribosomal subunit protein uS13.